Here is a 403-residue protein sequence, read N- to C-terminus: GPI-N-acetylgalactosamine transferase PGAP4 (403 aa).

The Cytoplasmic segment spans residues 1–22 (MSTSTSPAAMLLRRLRRLSWGS). The helical transmembrane segment at 23–43 (TAVQLFILTVVTFGLLAPLAC) threads the bilayer. Residues 44 to 259 (HRLLHSYFYL…RLQHYINPEP (216 aa)) are Lumenal-facing. Asn87 carries an N-linked (GalNAc...) asparagine glycan. Residue Val109 coordinates UDP-N-acetyl-alpha-D-galactosamine. Cystine bridges form between Cys132–Cys136 and Cys144–Cys194. The DXD motif signature appears at 211-213 (EDD). The chain crosses the membrane as a helical span at residues 260–280 (MRILEWVGVGMLLGPLLTWIY). At 281 to 287 (MRFASRP) the chain is on the cytoplasmic side. Residues 288-308 (GFSWPVMLFFSLYSMGLVELV) traverse the membrane as a helical segment. At 309 to 403 (GRHYFLELRR…LRYNFHPSLL (95 aa)) the chain is on the lumenal side. A disulfide bridge links Cys332 with Cys333. Thr334, Pro335, and Lys362 together coordinate UDP-N-acetyl-alpha-D-galactosamine.

It belongs to the PGAP4 family. Post-translationally, glycosylated.

The protein resides in the golgi apparatus membrane. In terms of biological role, golgi-resident glycosylphosphatidylinositol (GPI)-N-acetylgalactosamine transferase that catalyzes the N-acetyl-beta-D-galactosamine transfer from an UDP-N-acetyl-alpha-D-galactosamine to the 4-OH-position of the first mannose of the glycosylphosphatidylinositol (GPI) of a GPI-anchored protein (GPI-AP). This modification occurs after the fatty acid remodeling step of the GPI-anchor maturation. This Homo sapiens (Human) protein is GPI-N-acetylgalactosamine transferase PGAP4.